The primary structure comprises 388 residues: MTKQDYYTTLNISNTASQLDIKRAYKKLAIKYHPDRNQGNKTAEEKFKKIKQAYEILSDTKKRNLYDQYGHSAFEQNNNSNNEFHSSFTTSTSDFNDIFGDVFGDIFGSNKKNRKEKGSDLQYNIILTLEEAVKGIKKEIRIPKLDKCQSCYGYGSAYGSKPSTCTSCNGHGQIHMRKGFFSVQQTCSTCRGTGTMIKNPCKICFGQGRIKKSKKLSITIPAGIDTNDQIRLNNEGEAGKYGAKSGDLYIQIKVKKHPIFKRDENNLHCKIPINFVIAGGSIILYSSFRGEITVPTLEGKINLKIPSETQSGKIFRIRGKGVKSVRKGFQGDLFCKIIVETPVNLNSFQKKILYQLGESFKNYKGENNSPKSKRFFNSVKKFFNNFTK.

The region spanning 5 to 70 (DYYTTLNISN…KKRNLYDQYG (66 aa)) is the J domain. The segment at 135-213 (GIKKEIRIPK…CFGQGRIKKS (79 aa)) adopts a CR-type zinc-finger fold. Cys148, Cys151, Cys165, Cys168, Cys187, Cys190, Cys201, and Cys204 together coordinate Zn(2+). CXXCXGXG motif repeat units follow at residues 148–155 (CQSCYGYG), 165–172 (CTSCNGHG), 187–194 (CSTCRGTG), and 201–208 (CKICFGQG).

It belongs to the DnaJ family. In terms of assembly, homodimer. The cofactor is Zn(2+).

The protein resides in the cytoplasm. In terms of biological role, participates actively in the response to hyperosmotic and heat shock by preventing the aggregation of stress-denatured proteins and by disaggregating proteins, also in an autonomous, DnaK-independent fashion. Unfolded proteins bind initially to DnaJ; upon interaction with the DnaJ-bound protein, DnaK hydrolyzes its bound ATP, resulting in the formation of a stable complex. GrpE releases ADP from DnaK; ATP binding to DnaK triggers the release of the substrate protein, thus completing the reaction cycle. Several rounds of ATP-dependent interactions between DnaJ, DnaK and GrpE are required for fully efficient folding. Also involved, together with DnaK and GrpE, in the DNA replication of plasmids through activation of initiation proteins. The protein is Chaperone protein DnaJ of Buchnera aphidicola subsp. Cinara cedri (strain Cc).